Consider the following 555-residue polypeptide: Formate--tetrahydrofolate ligase (555 aa).

An ATP-binding site is contributed by T65–T72.

This sequence belongs to the formate--tetrahydrofolate ligase family.

The enzyme catalyses (6S)-5,6,7,8-tetrahydrofolate + formate + ATP = (6R)-10-formyltetrahydrofolate + ADP + phosphate. It functions in the pathway one-carbon metabolism; tetrahydrofolate interconversion. In Thermoanaerobacter pseudethanolicus (strain ATCC 33223 / 39E) (Clostridium thermohydrosulfuricum), this protein is Formate--tetrahydrofolate ligase.